The sequence spans 469 residues: Glutamate--tRNA ligase (469 aa).

The short motif at 11–21 is the 'HIGH' region element; the sequence is PSPTGFIHLGN. Basic and acidic residues predominate over residues 118-131; it reads GEKPRYDGTWRPEP. A disordered region spans residues 118–139; sequence GEKPRYDGTWRPEPGKVLPEPP. Positions 243–247 match the 'KMSKS' region motif; sequence KMSKR. Residue Lys-246 participates in ATP binding.

This sequence belongs to the class-I aminoacyl-tRNA synthetase family. Glutamate--tRNA ligase type 1 subfamily. Monomer.

It localises to the cytoplasm. It catalyses the reaction tRNA(Glu) + L-glutamate + ATP = L-glutamyl-tRNA(Glu) + AMP + diphosphate. In terms of biological role, catalyzes the attachment of glutamate to tRNA(Glu) in a two-step reaction: glutamate is first activated by ATP to form Glu-AMP and then transferred to the acceptor end of tRNA(Glu). The polypeptide is Glutamate--tRNA ligase (Burkholderia mallei (strain NCTC 10247)).